We begin with the raw amino-acid sequence, 139 residues long: Ribonuclease P/MRP protein subunit POP5 (139 aa).

The protein belongs to the eukaryotic/archaeal RNase P protein component 2 family.

Its subcellular location is the nucleus. It catalyses the reaction Endonucleolytic cleavage of RNA, removing 5'-extranucleotides from tRNA precursor.. Its function is as follows. Component of ribonuclease P, a protein complex that generates mature tRNA molecules by cleaving their 5'-ends. Also a component of RNase MRP, which cleaves pre-rRNA sequences. The chain is Ribonuclease P/MRP protein subunit POP5 from Schizosaccharomyces pombe (strain 972 / ATCC 24843) (Fission yeast).